Consider the following 374-residue polypeptide: DNA replication and repair protein RecF (374 aa).

Position 34-41 (34-41 (GNNGSGKT)) interacts with ATP.

This sequence belongs to the RecF family.

The protein localises to the cytoplasm. In terms of biological role, the RecF protein is involved in DNA metabolism; it is required for DNA replication and normal SOS inducibility. RecF binds preferentially to single-stranded, linear DNA. It also seems to bind ATP. This chain is DNA replication and repair protein RecF, found in Allorhizobium ampelinum (strain ATCC BAA-846 / DSM 112012 / S4) (Agrobacterium vitis (strain S4)).